The primary structure comprises 467 residues: Argininosuccinate lyase (467 aa).

The protein belongs to the lyase 1 family. Argininosuccinate lyase subfamily.

The protein resides in the cytoplasm. It carries out the reaction 2-(N(omega)-L-arginino)succinate = fumarate + L-arginine. It participates in amino-acid biosynthesis; L-arginine biosynthesis; L-arginine from L-ornithine and carbamoyl phosphate: step 3/3. The sequence is that of Argininosuccinate lyase from Allorhizobium ampelinum (strain ATCC BAA-846 / DSM 112012 / S4) (Agrobacterium vitis (strain S4)).